The following is a 324-amino-acid chain: MVLIEQVVLVASILITFGTCLAATKYAARLFPHFEPLQFYDEATNPMELNIVLAFVVGLIGSVVVLLYFDSQKIKPVLNPTQWQQYRLMEKQKLSDNTALYRFKLPRSNNILGLPIGQHISVQANMGGKTVVRSYTPTSSDDDHGFFDLVVKSYEQGNVSKYIGSMKIGDLLSVKGPKGQMRYAPGLSRHIGMIAGGTGLTPCLQIIRAALKNPADKTQIDFIYANVKETDILLKDELDELALKHKDQFRISYFLNEAPEGWKGGVGFVTKEALEKNLPKPANDIKVLMCGPPPMIKAMTGHLEALGYEKPRTVSKLEDQVFCF.

The chain crosses the membrane as a helical span at residues 49–69 (LNIVLAFVVGLIGSVVVLLYF). Residues 81-184 (TQWQQYRLME…KGPKGQMRYA (104 aa)) form the FAD-binding FR-type domain. FAD contacts are provided by residues 164–179 (GSMKIGDLLSVKGPKG) and 190–222 (HIGMIAGGTGLTPCLQIIRAALKNPADKTQIDF).

It belongs to the flavoprotein pyridine nucleotide cytochrome reductase family. Monomer. Component of the 2-(3-amino-3-carboxypropyl)histidine synthase complex composed of DPH1, DPH2, DPH3 and a NADH-dependent reductase, predominantly CBR1. FAD serves as cofactor.

It is found in the mitochondrion outer membrane. The enzyme catalyses 2 Fe(III)-[cytochrome b5] + NADH = 2 Fe(II)-[cytochrome b5] + NAD(+) + H(+). The catalysed reaction is 2 Fe(3+)-[Dph3] + NADH = 2 Fe(2+)-[Dph3] + NAD(+) + H(+). Its pathway is protein modification; peptidyl-diphthamide biosynthesis. In terms of biological role, NADH-dependent reductase for DPH3 and cytochrome b5. Required for the first step of diphthamide biosynthesis, a post-translational modification of histidine which occurs in elongation factor 2. DPH1 and DPH2 transfer a 3-amino-3-carboxypropyl (ACP) group from S-adenosyl-L-methionine (SAM) to a histidine residue, the reaction is assisted by a reduction system comprising DPH3 and a NADH-dependent reductase, predominantly CBR1. By reducing DPH3, also involved in the formation of the tRNA wobble base modification mcm5s 2U (5-methoxycarbonylmethyl-2-thiouridine), mediated by the elongator complex. The cytochrome b5/NADH cytochrome b5 reductase electron transfer system supports the catalytic activity of several sterol biosynthetic enzymes. In Mycosarcoma maydis (Corn smut fungus), this protein is NADH-cytochrome b5 reductase 1 (CBR1).